The following is a 231-amino-acid chain: Sugar fermentation stimulation protein homolog (231 aa).

This sequence belongs to the SfsA family.

The protein is Sugar fermentation stimulation protein homolog of Pyrobaculum islandicum (strain DSM 4184 / JCM 9189 / GEO3).